The sequence spans 578 residues: Palmitoyltransferase ZDHHC1 (578 aa).

Topologically, residues 1 to 41 are cytoplasmic; that stretch reads MDVCSKNSNRTAPVSEGGIRRADVPLCSRTNGWSWPPHPFQ. Residues 42-62 form a helical membrane-spanning segment; that stretch reads FLAWLLYLYFAVTGFGVFVPL. The Lumenal portion of the chain corresponds to 63–71; the sequence is LPTHWIPAG. A helical transmembrane segment spans residues 72 to 92; the sequence is YICTGITFVCHLFMHLMAVSI. At 93–174 the chain is on the cytoplasmic side; the sequence is DPADYNVRAK…YWLFLNSVIS (82 aa). The 53-residue stretch at 121 to 173 folds into the DHHC domain; the sequence is ENCHCYLCEVDVGPKSKHCSACNKCVASFDHHCRWLNNCVGSRNYWLFLNSVI. Cys-153 (S-palmitoyl cysteine intermediate) is an active-site residue. Residues 175-195 form a helical membrane-spanning segment; the sequence is ALLGIVLVVVIASYVFIEFFL. At 196-230 the chain is on the lumenal side; sequence DPSKLRSDKHFQQVRNESVVWFVFLPVAPVTTAGP. The chain crosses the membrane as a helical span at residues 231-251; sequence AIPALAGVTIALGLLSALLLG. Residues 252 to 578 are Cytoplasmic-facing; it reads HLLCFHIYLM…PSSRVGTSLA (327 aa). A compositionally biased stretch (basic and acidic residues) spans 278-288; it reads QEAGDSRKPPP. 4 disordered regions span residues 278–298, 345–376, 497–517, and 532–578; these read QEAGDSRKPPPENDSGVPKLN, HMDEEEHLPSVLTEQKASPHPHKHAQKKKRKV, SAAGHAAPSPQPRTKRKTAAR, and SMFM…TSLA. The segment covering 363–376 has biased composition (basic residues); that stretch reads PHPHKHAQKKKRKV. Over residues 552–561 the composition is skewed to basic residues; sequence AAKRKQTGKK.

The protein belongs to the DHHC palmitoyltransferase family.

The protein localises to the endosome membrane. It is found in the endoplasmic reticulum membrane. Its subcellular location is the golgi apparatus. It carries out the reaction L-cysteinyl-[protein] + hexadecanoyl-CoA = S-hexadecanoyl-L-cysteinyl-[protein] + CoA. Its function is as follows. Palmitoyltransferase that catalyzes the addition of palmitate onto various protein substrates, such as ncdn and nlrp3. The protein is Palmitoyltransferase ZDHHC1 of Danio rerio (Zebrafish).